The following is a 284-amino-acid chain: Tropomyosin alpha-3 chain (284 aa).

The residue at position 1 (methionine 1) is an N-acetylmethionine. The tract at residues 1 to 40 is disordered; it reads MEAIKKKMQMLKLDKENALDRAEQAEAEQKQAEERSKQLE. A coiled-coil region spans residues 1-284; it reads MEAIKKKMQM…DHALNDMTSI (284 aa). The segment covering 12–40 has biased composition (basic and acidic residues); that stretch reads KLDKENALDRAEQAEAEQKQAEERSKQLE. Threonine 53 carries the post-translational modification Phosphothreonine. Residues serine 61 and serine 87 each carry the phosphoserine modification. Phosphothreonine occurs at positions 108 and 252. At tyrosine 261 the chain carries Phosphotyrosine. At serine 271 the chain carries Phosphoserine. Threonine 282 carries the post-translational modification Phosphothreonine. Serine 283 carries the post-translational modification Phosphoserine.

It belongs to the tropomyosin family. In terms of assembly, homodimer. Heterodimer of an alpha (TPM1, TPM3 or TPM4) and a beta (TPM2) chain. Interacts with TMOD1. Interacts with TNNT1.

The protein localises to the cytoplasm. Its subcellular location is the cytoskeleton. In terms of biological role, binds to actin filaments in muscle and non-muscle cells. Plays a central role, in association with the troponin complex, in the calcium dependent regulation of vertebrate striated muscle contraction. Smooth muscle contraction is regulated by interaction with caldesmon. In non-muscle cells is implicated in stabilizing cytoskeleton actin filaments. This Sus scrofa (Pig) protein is Tropomyosin alpha-3 chain (TPM3).